Here is a 165-residue protein sequence, read N- to C-terminus: Pyruvoyl-dependent arginine decarboxylase (165 aa).

Pyruvic acid (Ser) is present on S53.

It belongs to the PdaD family. Pyruvate is required as a cofactor.

It carries out the reaction L-arginine + H(+) = agmatine + CO2. This is Pyruvoyl-dependent arginine decarboxylase from Methanococcus aeolicus (strain ATCC BAA-1280 / DSM 17508 / OCM 812 / Nankai-3).